A 287-amino-acid polypeptide reads, in one-letter code: Phosphatidylserine decarboxylase proenzyme (287 aa).

Active-site charge relay system; for autoendoproteolytic cleavage activity residues include Asp90, His147, and Ser253. The active-site Schiff-base intermediate with substrate; via pyruvic acid; for decarboxylase activity is Ser253. The residue at position 253 (Ser253) is a Pyruvic acid (Ser); by autocatalysis.

This sequence belongs to the phosphatidylserine decarboxylase family. PSD-B subfamily. Prokaryotic type I sub-subfamily. In terms of assembly, heterodimer of a large membrane-associated beta subunit and a small pyruvoyl-containing alpha subunit. It depends on pyruvate as a cofactor. Post-translationally, is synthesized initially as an inactive proenzyme. Formation of the active enzyme involves a self-maturation process in which the active site pyruvoyl group is generated from an internal serine residue via an autocatalytic post-translational modification. Two non-identical subunits are generated from the proenzyme in this reaction, and the pyruvate is formed at the N-terminus of the alpha chain, which is derived from the carboxyl end of the proenzyme. The autoendoproteolytic cleavage occurs by a canonical serine protease mechanism, in which the side chain hydroxyl group of the serine supplies its oxygen atom to form the C-terminus of the beta chain, while the remainder of the serine residue undergoes an oxidative deamination to produce ammonia and the pyruvoyl prosthetic group on the alpha chain. During this reaction, the Ser that is part of the protease active site of the proenzyme becomes the pyruvoyl prosthetic group, which constitutes an essential element of the active site of the mature decarboxylase.

It is found in the cell membrane. It catalyses the reaction a 1,2-diacyl-sn-glycero-3-phospho-L-serine + H(+) = a 1,2-diacyl-sn-glycero-3-phosphoethanolamine + CO2. It participates in phospholipid metabolism; phosphatidylethanolamine biosynthesis; phosphatidylethanolamine from CDP-diacylglycerol: step 2/2. Its function is as follows. Catalyzes the formation of phosphatidylethanolamine (PtdEtn) from phosphatidylserine (PtdSer). This is Phosphatidylserine decarboxylase proenzyme from Aliivibrio fischeri (strain ATCC 700601 / ES114) (Vibrio fischeri).